Consider the following 354-residue polypeptide: UDP-3-O-acylglucosamine N-acyltransferase (354 aa).

The Proton acceptor role is filled by histidine 245.

Belongs to the transferase hexapeptide repeat family. LpxD subfamily. Homotrimer.

It catalyses the reaction a UDP-3-O-[(3R)-3-hydroxyacyl]-alpha-D-glucosamine + a (3R)-hydroxyacyl-[ACP] = a UDP-2-N,3-O-bis[(3R)-3-hydroxyacyl]-alpha-D-glucosamine + holo-[ACP] + H(+). It functions in the pathway bacterial outer membrane biogenesis; LPS lipid A biosynthesis. Functionally, catalyzes the N-acylation of UDP-3-O-acylglucosamine using 3-hydroxyacyl-ACP as the acyl donor. Is involved in the biosynthesis of lipid A, a phosphorylated glycolipid that anchors the lipopolysaccharide to the outer membrane of the cell. In Anaeromyxobacter dehalogenans (strain 2CP-C), this protein is UDP-3-O-acylglucosamine N-acyltransferase.